A 1188-amino-acid polypeptide reads, in one-letter code: Phospholipid-transporting ATPase IB (1188 aa).

The Cytoplasmic portion of the chain corresponds to 1 to 94 (MLNGAGLDKA…PRFLYEQIRR (94 aa)). At Thr-45 the chain carries Phosphothreonine. The helical transmembrane segment at 95-115 (AANAFFLFIALLQQIPDVSPT) threads the bilayer. Residues 116-119 (GRYT) lie on the Extracellular side of the membrane. The helical transmembrane segment at 120–140 (TLVPLIIILTIAGIKEIVEDF) threads the bilayer. Residues 141-316 (KRHKADNAVN…SNVEKVTNVQ (176 aa)) are Cytoplasmic-facing. A helical transmembrane segment spans residues 317–337 (ILVLFGILLVMALVSSAGALY). Over 338–364 (WNRSHGEKNWYIKKMDTTSDNFGYNLL) the chain is Extracellular. The chain crosses the membrane as a helical span at residues 365–385 (TFIILYNNLIPISLLVTLEVV). Over 386 to 887 (KYTQALFINW…CILYCFYKNV (502 aa)) the chain is Cytoplasmic. Asp-428 serves as the catalytic 4-aspartylphosphate intermediate. Residues Asp-428, Lys-429, Thr-430, Glu-528, Phe-569, Lys-592, Arg-625, Thr-705, Gly-706, Asp-707, Arg-795, and Lys-801 each contribute to the ATP site. A Mg(2+)-binding site is contributed by Asp-428. Thr-430 provides a ligand contact to Mg(2+). Asp-821 contacts Mg(2+). ATP contacts are provided by Asn-824 and Asp-825. Residue Asp-825 coordinates Mg(2+). A helical transmembrane segment spans residues 888-908 (VLYIIELWFAFVNGFSGQILF). At 909–910 (ER) the chain is on the extracellular side. The chain crosses the membrane as a helical span at residues 911 to 931 (WCIGLYNVIFTALPPFTLGIF). Over 932–959 (ERSCTQESMLRFPQLYKITQNGEGFNTK) the chain is Cytoplasmic. The chain crosses the membrane as a helical span at residues 960-980 (VFWGHCINALVHSLILFWFPM). Residues 981–997 (KALEHDTVLTSGHATDY) lie on the Extracellular side of the membrane. Residues 998–1018 (LFVGNIVYTYVVVTVCLKAGL) traverse the membrane as a helical segment. Residues 1019-1028 (ETTAWTKFSH) are Cytoplasmic-facing. Residues 1029-1049 (LAVWGSMLTWLVFFGIYSTIW) form a helical membrane-spanning segment. The Extracellular portion of the chain corresponds to 1050 to 1063 (PTIPIAPDMRGQAT). Residues 1064 to 1084 (MVLSSAHFWLGLFLVPTACLI) form a helical membrane-spanning segment. Over 1085–1188 (EDVAWRAAKH…DTTKKKSRKK (104 aa)) the chain is Cytoplasmic. Residues 1162 to 1188 (SQEEHGAVSQEEVIRAYDTTKKKSRKK) form a disordered region. Positions 1163–1182 (QEEHGAVSQEEVIRAYDTTK) are enriched in basic and acidic residues.

Belongs to the cation transport ATPase (P-type) (TC 3.A.3) family. Type IV subfamily. In terms of assembly, component of a P4-ATPase flippase complex which consists of a catalytic alpha subunit and an accessory beta subunit. Interacts with TMEM30A to form a flippase complex. The cofactor is Mg(2+). As to expression, strongly expressed in the brain, cerebellum, retina and testis.

It is found in the membrane. Its subcellular location is the golgi apparatus membrane. It localises to the endosome membrane. The protein localises to the cell membrane. The protein resides in the photoreceptor outer segment membrane. It is found in the photoreceptor inner segment membrane. The catalysed reaction is ATP + H2O + phospholipidSide 1 = ADP + phosphate + phospholipidSide 2.. It carries out the reaction a 1,2-diacyl-sn-glycero-3-phospho-L-serine(out) + ATP + H2O = a 1,2-diacyl-sn-glycero-3-phospho-L-serine(in) + ADP + phosphate + H(+). It catalyses the reaction a 1,2-diacyl-sn-glycero-3-phosphoethanolamine(in) + ATP + H2O = a 1,2-diacyl-sn-glycero-3-phosphoethanolamine(out) + ADP + phosphate + H(+). Its function is as follows. Catalytic component of a P4-ATPase flippase complex which catalyzes the hydrolysis of ATP coupled to the transport of aminophospholipids from the outer to the inner leaflet of various membranes and ensures the maintenance of asymmetric distribution of phospholipids. Able to translocate phosphatidylserine, but not phosphatidylcholine. Phospholipid translocation also seems to be implicated in vesicle formation and in uptake of lipid signaling molecules. Reconstituted to liposomes, the ATP8A2:TMEM30A flippase complex predominantly transports phosphatidylserine (PS) and to a lesser extent phosphatidylethanolamine (PE). Phospholipid translocation is not associated with a countertransport of an inorganic ion or other charged substrate from the cytoplasmic side toward the exoplasm in connection with the phosphorylation from ATP. ATP8A2:TMEM30A may be involved in regulation of neurite outgrowth. Proposed to function in the generation and maintenance of phospholipid asymmetry in photoreceptor disk membranes and neuronal axon membranes. May be involved in vesicle trafficking in neuronal cells. Required for normal visual and auditory function; involved in photoreceptor and inner ear spiral ganglion cell survival. This Homo sapiens (Human) protein is Phospholipid-transporting ATPase IB.